The primary structure comprises 214 residues: Peptide methionine sulfoxide reductase B1, chloroplastic (214 aa).

A chloroplast-targeting transit peptide spans 1–53; that stretch reads MAMRQYAAATAASSSFRARPRARPSCLPAAALPLAPCCGVAWSRASYRRASVR. Positions 58–81 are enriched in low complexity; it reads ASSSSSSSSSSPSPQGQAQAQAQG. The tract at residues 58–91 is disordered; it reads ASSSSSSSSSSPSPQGQAQAQAQGKPNYSTSLTD. The region spanning 91–213 is the MsrB domain; it reads DEEWRKRLTK…NSASLKLKKT (123 aa). The Zn(2+) site is built by Cys130, Cys133, Cys179, and Cys182. Cys202 (nucleophile) is an active-site residue.

The protein belongs to the MsrB Met sulfoxide reductase family. Zn(2+) is required as a cofactor. In terms of tissue distribution, expressed in leaves and flowers.

Its subcellular location is the plastid. It is found in the chloroplast. It carries out the reaction L-methionyl-[protein] + [thioredoxin]-disulfide + H2O = L-methionyl-(R)-S-oxide-[protein] + [thioredoxin]-dithiol. Catalyzes the reduction of methionine sulfoxide (MetSO) to methionine in proteins. Involved in abiotic stress response. Plays a protective role against oxidative stress by restoring activity to proteins that have been inactivated by methionine oxidation. MSRB family specifically reduces the MetSO R-enantiomer. This Oryza sativa subsp. japonica (Rice) protein is Peptide methionine sulfoxide reductase B1, chloroplastic.